We begin with the raw amino-acid sequence, 595 residues long: Actin-histidine N-methyltransferase (595 aa).

Positions 1-22 (MGKKSRVKTQKSGTGATATVSP) are disordered. Positions 10 to 20 (QKSGTGATATV) are enriched in polar residues. Residues arginine 75, 104-106 (EGF), arginine 254, 275-279 (DMCNH), and 325-327 (SGF) each bind S-adenosyl-L-methionine. An SET domain is found at 94 to 314 (EGFEMVNFKE…AGEQIYIFYG (221 aa)). Serine 513 is subject to Phosphoserine. The segment at 552-595 (LVNGENCIPNGTRSENEDLNQEENKRAVEDAKGSSSDSTDAVKK) is disordered. Residues 573–583 (EENKRAVEDAK) are compositionally biased toward basic and acidic residues. Polar residues predominate over residues 584 to 595 (GSSSDSTDAVKK).

The protein belongs to the class V-like SAM-binding methyltransferase superfamily. SETD3 actin-histidine methyltransferase family. Interacts with MYOD1. Post-translationally, phosphorylated by GSK3B, which is required for recognition by the SCF(FBXW7) complex and subsequent degradation. Ubiquitinated by the SCF(FBXW7) complex following phosphorylation by GSK3B, leading to its degradation by the proteasome.

It is found in the cytoplasm. The protein localises to the nucleus. The enzyme catalyses L-histidyl-[protein] + S-adenosyl-L-methionine = N(tele)-methyl-L-histidyl-[protein] + S-adenosyl-L-homocysteine + H(+). Its function is as follows. Protein-histidine N-methyltransferase that specifically mediates 3-methylhistidine (tele-methylhistidine) methylation of actin at 'His-73'. Histidine methylation of actin is required for smooth muscle contraction of the laboring uterus during delivery. Does not have protein-lysine N-methyltransferase activity and probably only catalyzes histidine methylation of actin. The chain is Actin-histidine N-methyltransferase from Otolemur garnettii (Small-eared galago).